Reading from the N-terminus, the 300-residue chain is Manganese-binding lipoprotein MntA (300 aa).

Positions 1-19 (MKKVCFSFVIMVIALIAAG) are cleaved as a signal peptide. C20 carries the N-palmitoyl cysteine lipid modification. The S-diacylglycerol cysteine moiety is linked to residue C20. Mn(2+)-binding residues include H68, H130, E196, and D271.

This sequence belongs to the bacterial solute-binding protein 9 family.

Its subcellular location is the cell membrane. Its function is as follows. Probably part of ATP-binding cassette (ABC) transport system MntABCD involved in manganese import. Binds manganese and delivers it to the membrane permease for translocation into the cytoplasm. This is Manganese-binding lipoprotein MntA (mntA) from Halalkalibacterium halodurans (strain ATCC BAA-125 / DSM 18197 / FERM 7344 / JCM 9153 / C-125) (Bacillus halodurans).